We begin with the raw amino-acid sequence, 539 residues long: Chaperonin GroEL (539 aa).

ATP is bound by residues 30–33, Lys51, 87–91, Gly415, 479–481, and Asp495; these read TLGP, DGTTT, and NAA.

This sequence belongs to the chaperonin (HSP60) family. Forms a cylinder of 14 subunits composed of two heptameric rings stacked back-to-back. Interacts with the co-chaperonin GroES.

The protein localises to the cytoplasm. The catalysed reaction is ATP + H2O + a folded polypeptide = ADP + phosphate + an unfolded polypeptide.. In terms of biological role, together with its co-chaperonin GroES, plays an essential role in assisting protein folding. The GroEL-GroES system forms a nano-cage that allows encapsulation of the non-native substrate proteins and provides a physical environment optimized to promote and accelerate protein folding. This Enterobacter agglomerans (Erwinia herbicola) protein is Chaperonin GroEL.